A 264-amino-acid polypeptide reads, in one-letter code: Probable pectate lyase D (264 aa).

An N-terminal signal peptide occupies residues 1–17 (MFFKQLAVLSFATSALA). Asn-60 carries an N-linked (GlcNAc...) asparagine glycan. The tract at residues 234–264 (YEGTDNNDEEPQEISTGPSNACQYTDPLPSC) is disordered. Acidic residues predominate over residues 235–245 (EGTDNNDEEPQ). Over residues 246-256 (EISTGPSNACQ) the composition is skewed to polar residues.

It belongs to the polysaccharide lyase 3 family. It depends on Ca(2+) as a cofactor.

It is found in the secreted. It catalyses the reaction Eliminative cleavage of (1-&gt;4)-alpha-D-galacturonan to give oligosaccharides with 4-deoxy-alpha-D-galact-4-enuronosyl groups at their non-reducing ends.. Functionally, pectinolytic enzyme consist of four classes of enzymes: pectin lyase, polygalacturonase, pectin methylesterase and rhamnogalacturonase. Among pectinolytic enzymes, pectin lyase is the most important in depolymerization of pectin, since it cleaves internal glycosidic bonds of highly methylated pectins. Favors pectate, the anion, over pectin, the methyl ester. In Emericella nidulans (strain FGSC A4 / ATCC 38163 / CBS 112.46 / NRRL 194 / M139) (Aspergillus nidulans), this protein is Probable pectate lyase D (plyD).